Consider the following 638-residue polypeptide: 3D-(3,5/4)-trihydroxycyclohexane-1,2-dione hydrolase (638 aa).

Glutamate 67 provides a ligand contact to thiamine diphosphate. Positions 442 to 523 are thiamine pyrophosphate binding; it reads SLPGDLQRLW…INIMLFDNSG (82 aa). Mg(2+) contacts are provided by aspartate 494 and asparagine 521.

The protein belongs to the TPP enzyme family. It depends on Mg(2+) as a cofactor. Thiamine diphosphate serves as cofactor.

The catalysed reaction is 3D-3,5/4-trihydroxycyclohexane-1,2-dione + H2O = 5-deoxy-D-glucuronate + H(+). Its pathway is polyol metabolism; myo-inositol degradation into acetyl-CoA; acetyl-CoA from myo-inositol: step 3/7. Functionally, involved in the cleavage of the C1-C2 bond of 3D-(3,5/4)-trihydroxycyclohexane-1,2-dione (THcHDO) to yield 5-deoxy-glucuronate (5DG). In Listeria monocytogenes serotype 4b (strain F2365), this protein is 3D-(3,5/4)-trihydroxycyclohexane-1,2-dione hydrolase.